Consider the following 215-residue polypeptide: Porin MspC (215 aa).

The N-terminal stretch at 1–31 (MKAISRVLIAMISALAAAVAGLFVSAGTSHA) is a signal peptide.

It belongs to the mycobacterial porin (TC 1.B.24) family. In terms of assembly, octamers. Probably forms a goblet with the wide end on the exterior of the outer membrane and a central channel. It is not known if mixed oligomers of MspC with other Msp subunits form in vivo.

Its subcellular location is the cell outer membrane. It localises to the secreted. The protein resides in the cell wall. Its function is as follows. A constitutively expressed secondary porin, forms a water-filled channel which favors the permeation of cations and less efficiently phosphate. There are about 2400 porins in wild-type, 800 in an mspA deletion and 150 in a double mspA-mspC deletion. This is Porin MspC (mspC) from Mycolicibacterium smegmatis (strain ATCC 700084 / mc(2)155) (Mycobacterium smegmatis).